The sequence spans 65 residues: Sperm protamine P1 (65 aa).

The tract at residues Met-1–Tyr-65 is disordered.

Belongs to the protamine P1 family. Testis.

Its subcellular location is the nucleus. The protein resides in the chromosome. In terms of biological role, protamines substitute for histones in the chromatin of sperm during the haploid phase of spermatogenesis. They compact sperm DNA into a highly condensed, stable and inactive complex. This is Sperm protamine P1 (PRM1) from Lagorchestes hirsutus (Rufous hare-wallaby).